The chain runs to 461 residues: Fumarate hydratase class II (461 aa).

Residues 97 to 99 (SGT), 127 to 130 (HPND), 137 to 139 (SSN), and Thr185 each bind substrate. His186 acts as the Proton donor/acceptor in catalysis. Residue Ser316 is part of the active site. Substrate contacts are provided by residues Ser317 and 322–324 (KVN).

Belongs to the class-II fumarase/aspartase family. Fumarase subfamily. As to quaternary structure, homotetramer.

The protein resides in the cytoplasm. The enzyme catalyses (S)-malate = fumarate + H2O. Its pathway is carbohydrate metabolism; tricarboxylic acid cycle; (S)-malate from fumarate: step 1/1. In terms of biological role, involved in the TCA cycle. Catalyzes the stereospecific interconversion of fumarate to L-malate. In Staphylococcus epidermidis (strain ATCC 35984 / DSM 28319 / BCRC 17069 / CCUG 31568 / BM 3577 / RP62A), this protein is Fumarate hydratase class II.